The sequence spans 358 residues: tRNA-specific 2-thiouridylase MnmA (358 aa).

ATP contacts are provided by residues G8–S15 and L34. The active-site Nucleophile is C95. Cysteines 95 and 194 form a disulfide. Residue G120 coordinates ATP. An interaction with tRNA region spans residues K144–Q146. Residue C194 is the Cysteine persulfide intermediate of the active site. Residues R299 to Y300 form an interaction with tRNA region.

It belongs to the MnmA/TRMU family.

It is found in the cytoplasm. The catalysed reaction is S-sulfanyl-L-cysteinyl-[protein] + uridine(34) in tRNA + AH2 + ATP = 2-thiouridine(34) in tRNA + L-cysteinyl-[protein] + A + AMP + diphosphate + H(+). In terms of biological role, catalyzes the 2-thiolation of uridine at the wobble position (U34) of tRNA, leading to the formation of s(2)U34. The chain is tRNA-specific 2-thiouridylase MnmA from Synechocystis sp. (strain ATCC 27184 / PCC 6803 / Kazusa).